We begin with the raw amino-acid sequence, 238 residues long: Probable RNA/DNA demethylase ALKBH6 (238 aa).

The region spanning 96–227 (PANHVLVNQY…RVSLTIRRVP (132 aa)) is the Fe2OG dioxygenase domain. 2-oxoglutarate contacts are provided by asparagine 103 and tyrosine 105. Residues histidine 114 and aspartate 116 each coordinate Fe cation. The tract at residues 138–161 (YEPRRPEDDDPTEQPRPPPRPTTS) is disordered. Histidine 182 lines the Fe cation pocket. Positions 218 and 220 each coordinate 2-oxoglutarate.

The protein belongs to the alkB family. As to quaternary structure, interacts with VCPKMT. Requires Fe(2+) as cofactor. Widely expressed, with highest expression in testis and pancreas.

Its subcellular location is the cytoplasm. It is found in the nucleus. Its function is as follows. Probable Fe(2+)/2-oxoglutarate-dependent dioxygenase involved in oxidative demethylation of nucleic acids. Binds nucleic acids with a preference for ssDNA or ssRNA to other types of DNAs. May play a role in nucleic acid damage repair. The sequence is that of Probable RNA/DNA demethylase ALKBH6 from Homo sapiens (Human).